The primary structure comprises 79 residues: U-actitoxin-Avd9d (79 aa).

An N-terminal signal peptide occupies residues 1–19 (NLKVLAVFVLCAILVVVTA). Positions 20–37 (ERRGTETGGYKKDTLEDL) are excised as a propeptide. The region spanning 44–79 (CFDSFKEATCHMAKTNRLCKTSAKYQINCKKTCGLC) is the ShKT domain. Cystine bridges form between Cys44-Cys79, Cys53-Cys72, and Cys62-Cys76. The segment at 67-68 (KY) is crucial for binding to potassium channels.

Belongs to the sea anemone type 1 potassium channel toxin family. Type 1b subfamily.

The protein localises to the secreted. Its subcellular location is the nematocyst. Inhibits voltage-gated potassium channels (Kv1/KCNA). In Anemonia viridis (Snakelocks anemone), this protein is U-actitoxin-Avd9d.